The chain runs to 286 residues: Pantothenate synthetase (286 aa).

Residue 30–37 participates in ATP binding; that stretch reads MGNLHAGH. His37 functions as the Proton donor in the catalytic mechanism. Gln61 serves as a coordination point for (R)-pantoate. Gln61 provides a ligand contact to beta-alanine. 149 to 152 contacts ATP; the sequence is GEKD. Gln155 serves as a coordination point for (R)-pantoate. Residues Val178 and 186 to 189 contribute to the ATP site; that span reads MSSR.

It belongs to the pantothenate synthetase family. Homodimer.

Its subcellular location is the cytoplasm. The enzyme catalyses (R)-pantoate + beta-alanine + ATP = (R)-pantothenate + AMP + diphosphate + H(+). The protein operates within cofactor biosynthesis; (R)-pantothenate biosynthesis; (R)-pantothenate from (R)-pantoate and beta-alanine: step 1/1. Functionally, catalyzes the condensation of pantoate with beta-alanine in an ATP-dependent reaction via a pantoyl-adenylate intermediate. This chain is Pantothenate synthetase, found in Methylococcus capsulatus (strain ATCC 33009 / NCIMB 11132 / Bath).